Here is a 309-residue protein sequence, read N- to C-terminus: tRNA dimethylallyltransferase (309 aa).

15-22 (GPTASGKS) provides a ligand contact to ATP. Position 17-22 (17-22 (TASGKS)) interacts with substrate. Residues 40–43 (DSRQ) form an interaction with substrate tRNA region.

The protein belongs to the IPP transferase family. In terms of assembly, monomer. Mg(2+) is required as a cofactor.

It catalyses the reaction adenosine(37) in tRNA + dimethylallyl diphosphate = N(6)-dimethylallyladenosine(37) in tRNA + diphosphate. Catalyzes the transfer of a dimethylallyl group onto the adenine at position 37 in tRNAs that read codons beginning with uridine, leading to the formation of N6-(dimethylallyl)adenosine (i(6)A). The chain is tRNA dimethylallyltransferase from Chlorobium phaeovibrioides (strain DSM 265 / 1930) (Prosthecochloris vibrioformis (strain DSM 265)).